We begin with the raw amino-acid sequence, 1152 residues long: DNA-directed RNA polymerase subunit beta (1152 aa).

It belongs to the RNA polymerase beta chain family. The RNAP catalytic core consists of 2 alpha, 1 beta, 1 beta' and 1 omega subunit. When a sigma factor is associated with the core the holoenzyme is formed, which can initiate transcription.

The enzyme catalyses RNA(n) + a ribonucleoside 5'-triphosphate = RNA(n+1) + diphosphate. Its function is as follows. DNA-dependent RNA polymerase catalyzes the transcription of DNA into RNA using the four ribonucleoside triphosphates as substrates. In Deinococcus geothermalis (strain DSM 11300 / CIP 105573 / AG-3a), this protein is DNA-directed RNA polymerase subunit beta.